The primary structure comprises 72 residues: MAFLKKSLFLVLFLGMVSLSICEEEKREEENEQEDDEQSEEKRGMFTNMLKGIGKLAGQAALGAVKTLAGEQ.

An N-terminal signal peptide occupies residues 1-22 (MAFLKKSLFLVLFLGMVSLSIC). The propeptide occupies 23–41 (EEEKREEENEQEDDEQSEE). The tract at residues 24-43 (EEKREEENEQEDDEQSEEKR) is disordered. The segment covering 30–39 (ENEQEDDEQS) has biased composition (acidic residues). An Alanine amide modification is found at alanine 69. A propeptide spanning residues 71–72 (EQ) is cleaved from the precursor.

This sequence belongs to the frog skin active peptide (FSAP) family. Dermaseptin subfamily. As to expression, expressed by the skin glands.

The protein localises to the secreted. Its function is as follows. Possesses a potent antimicrobial activity against Gram-positive and Gram-negative bacteria. Probably acts by disturbing membrane functions with its amphipathic structure. The chain is Dermaseptin-A4 from Agalychnis annae (Blue-sided leaf frog).